A 192-amino-acid chain; its full sequence is UPF0301 protein Bamb_0737 (192 aa).

It belongs to the UPF0301 (AlgH) family.

The chain is UPF0301 protein Bamb_0737 from Burkholderia ambifaria (strain ATCC BAA-244 / DSM 16087 / CCUG 44356 / LMG 19182 / AMMD) (Burkholderia cepacia (strain AMMD)).